The sequence spans 1227 residues: DNA-directed RNA polymerase subunit beta' (1227 aa).

Positions 60, 62, 75, and 78 each coordinate Zn(2+). Mg(2+)-binding residues include D449, D451, and D453. Positions 847, 921, 928, and 931 each coordinate Zn(2+).

It belongs to the RNA polymerase beta' chain family. As to quaternary structure, the RNAP catalytic core consists of 2 alpha, 1 beta, 1 beta' and 1 omega subunit. When a sigma factor is associated with the core the holoenzyme is formed, which can initiate transcription. Mg(2+) serves as cofactor. The cofactor is Zn(2+).

It carries out the reaction RNA(n) + a ribonucleoside 5'-triphosphate = RNA(n+1) + diphosphate. Functionally, DNA-dependent RNA polymerase catalyzes the transcription of DNA into RNA using the four ribonucleoside triphosphates as substrates. The chain is DNA-directed RNA polymerase subunit beta' from Lysinibacillus sphaericus (strain C3-41).